The following is a 345-amino-acid chain: NADPH dehydrogenase (345 aa).

23 to 26 provides a ligand contact to FMN; it reads SPMC. Tyr28 lines the substrate pocket. Residues Ala60 and Gln102 each coordinate FMN. Residue 164–167 participates in substrate binding; sequence HGAH. Residues Arg215 and 307–308 each bind FMN; that span reads GR.

Belongs to the NADH:flavin oxidoreductase/NADH oxidase family. NamA subfamily. Homotetramer. Requires FMN as cofactor.

It catalyses the reaction A + NADPH + H(+) = AH2 + NADP(+). Catalyzes the reduction of the double bond of an array of alpha,beta-unsaturated aldehydes and ketones. It also reduces the nitro group of nitroester and nitroaromatic compounds. It could have a role in detoxification processes. In Bacillus thuringiensis (strain Al Hakam), this protein is NADPH dehydrogenase.